We begin with the raw amino-acid sequence, 1057 residues long: Hemophilin receptor (1057 aa).

One can recognise a TBDR plug domain in the interval 168–285; sequence KVYDANRSSV…VGGAVVVKTL (118 aa). Residues 296 to 1057 enclose the TBDR beta-barrel domain; sequence SFGAELKVEG…TMKISWTTKF (762 aa).

This sequence belongs to the TonB-dependent receptor family.

Its subcellular location is the cell outer membrane. Functionally, part of a high affinity heme acquisition system. Functions as a gateway for heme entry into the bacterial cell, enabling growth on hemoprotein sources. Can acquire heme directly from hemoprotein reservoirs, however, HphA likely enhances the efficiency of this process by delivering heme to HphR. Is essential for virulence, bacterial dissemination and growth in the blood. In Acinetobacter baumannii, this protein is Hemophilin receptor.